Consider the following 57-residue polypeptide: Mambalgin-3 (57 aa).

Disulfide bonds link Cys-3–Cys-19, Cys-12–Cys-37, Cys-41–Cys-49, and Cys-50–Cys-55.

Belongs to the three-finger toxin family. Short-chain subfamily. Mambalgin sub-subfamily. As to expression, expressed by the venom gland.

It localises to the secreted. This three-finger toxin inhibits ASIC channels. It acts as a gating modifier toxin by decreasing the apparent proton sensitivity of activation and by slightly increasing the apparent proton sensitivity for inactivation. It binds more tightly to the closed state and to a much lesser extent the inactivated/desensitized state of ASIC1a. It interacts directly with the outside surface of the thumb domain of chicken ASIC1a (ASIC1a), but does not insert into the acidic pocket as suggested previously. This binding leads to relocation of the thumb domain that could disrupt the acidic pocket of cASIC1a. The peptide exerts both stimulatory and inhibitory effects on ASIC1a. It reversibly inhibits rASIC1a (IC(50)=17 nM), rASIC1b (IC(50)= 44 nM) and rASIC1a-rASIC2a (IC(50)=252 nM) channels. In vivo, it shows a potent naloxone-resistant analgesic effect against acute and inflammatory pain upon central and peripheral injection. In addition, it also has an opioid-independent effect on both thermal and mechanical inflammatory pain after systemic administration and is effective against neuropathic pain. The protein is Mambalgin-3 of Dendroaspis angusticeps (Eastern green mamba).